Reading from the N-terminus, the 505-residue chain is ATP synthase subunit alpha (505 aa).

170-177 serves as a coordination point for ATP; it reads GDRQTGKT.

This sequence belongs to the ATPase alpha/beta chains family. As to quaternary structure, F-type ATPases have 2 components, CF(1) - the catalytic core - and CF(0) - the membrane proton channel. CF(1) has five subunits: alpha(3), beta(3), gamma(1), delta(1), epsilon(1). CF(0) has four main subunits: a(1), b(1), b'(1) and c(9-12).

It is found in the cellular thylakoid membrane. It carries out the reaction ATP + H2O + 4 H(+)(in) = ADP + phosphate + 5 H(+)(out). Its function is as follows. Produces ATP from ADP in the presence of a proton gradient across the membrane. The alpha chain is a regulatory subunit. This Trichodesmium erythraeum (strain IMS101) protein is ATP synthase subunit alpha.